A 351-amino-acid chain; its full sequence is tRNA N6-adenosine threonylcarbamoyltransferase (351 aa).

Positions 111 and 115 each coordinate Fe cation. Substrate is bound by residues 134-138, aspartate 167, glycine 180, and asparagine 276; that span reads LVSGG. A Fe cation-binding site is contributed by aspartate 304.

Belongs to the KAE1 / TsaD family. Fe(2+) serves as cofactor.

Its subcellular location is the cytoplasm. The catalysed reaction is L-threonylcarbamoyladenylate + adenosine(37) in tRNA = N(6)-L-threonylcarbamoyladenosine(37) in tRNA + AMP + H(+). Required for the formation of a threonylcarbamoyl group on adenosine at position 37 (t(6)A37) in tRNAs that read codons beginning with adenine. Is involved in the transfer of the threonylcarbamoyl moiety of threonylcarbamoyl-AMP (TC-AMP) to the N6 group of A37, together with TsaE and TsaB. TsaD likely plays a direct catalytic role in this reaction. This is tRNA N6-adenosine threonylcarbamoyltransferase from Marinobacter nauticus (strain ATCC 700491 / DSM 11845 / VT8) (Marinobacter aquaeolei).